Reading from the N-terminus, the 74-residue chain is Kappa-stichotoxin-Hmg1a (74 aa).

Positions 1–22 (MKSQMIAAVLLIAFCLCVVVTA) are cleaved as a signal peptide. The propeptide occupies 23 to 39 (RMELQDVEDMENGFQKR). A ShKT domain is found at 42-74 (CKDLIPVSECTDIRCRTSMKYRLNLCRKTCGSC). Intrachain disulfides connect C42–C74, C51–C67, and C56–C71.

The protein belongs to the sea anemone type 1 potassium channel toxin family. Type 1a subfamily.

It localises to the secreted. The protein localises to the nematocyst. Potently blocks the voltage-gated potassium channel Kv1.1/KCNA1 (Ki=75 pM), KcsA (Ki~1 nM) and moderately blocks Kv1.2/KCNA2 (Ki=2.5 nM) and Kv1.3/KCNA3 (Ki=3.1 nM). Also facilitates acetylcholine release at the avian neuromuscular junction. Blockade and dissociation rate are sensitive to voltage. The chain is Kappa-stichotoxin-Hmg1a from Heteractis magnifica (Magnificent sea anemone).